The sequence spans 253 residues: Imidazole glycerol phosphate synthase subunit HisF (253 aa).

Residues aspartate 11 and aspartate 130 contribute to the active site.

The protein belongs to the HisA/HisF family. In terms of assembly, heterodimer of HisH and HisF.

Its subcellular location is the cytoplasm. The enzyme catalyses 5-[(5-phospho-1-deoxy-D-ribulos-1-ylimino)methylamino]-1-(5-phospho-beta-D-ribosyl)imidazole-4-carboxamide + L-glutamine = D-erythro-1-(imidazol-4-yl)glycerol 3-phosphate + 5-amino-1-(5-phospho-beta-D-ribosyl)imidazole-4-carboxamide + L-glutamate + H(+). It participates in amino-acid biosynthesis; L-histidine biosynthesis; L-histidine from 5-phospho-alpha-D-ribose 1-diphosphate: step 5/9. IGPS catalyzes the conversion of PRFAR and glutamine to IGP, AICAR and glutamate. The HisF subunit catalyzes the cyclization activity that produces IGP and AICAR from PRFAR using the ammonia provided by the HisH subunit. The sequence is that of Imidazole glycerol phosphate synthase subunit HisF from Ruminiclostridium cellulolyticum (strain ATCC 35319 / DSM 5812 / JCM 6584 / H10) (Clostridium cellulolyticum).